A 138-amino-acid polypeptide reads, in one-letter code: PTS system sorbose-specific EIIA component (138 aa).

The region spanning 1 to 125 is the PTS EIIA type-4 domain; that stretch reads MEIILVGHAH…KIKEEFSTSL (125 aa). The active-site Tele-phosphohistidine intermediate is histidine 8. Histidine 8 carries the post-translational modification Phosphohistidine; by HPr.

The protein localises to the cytoplasm. The phosphoenolpyruvate-dependent sugar phosphotransferase system (PTS), a major carbohydrate active transport system, catalyzes the phosphorylation of incoming sugar substrates concomitant with their translocation across the cell membrane. The enzyme II SorABCD PTS system is involved in L-sorbose transport. The protein is PTS system sorbose-specific EIIA component of Lacticaseibacillus casei (Lactobacillus casei).